Here is a 293-residue protein sequence, read N- to C-terminus: Prohibitin-2 (293 aa).

Residues 21-41 (FGGGFGLLALGGVGLLALSSL) traverse the membrane as a helical; Signal-anchor for type II membrane protein segment. The stretch at 190-235 (GREYAAAIEAKQVAQQEAERARFLVEKALQDKRSIIVKAEGEAQSA) forms a coiled coil.

This sequence belongs to the prohibitin family. In terms of assembly, the mitochondrial prohibitin complex consists of two subunits (PHB1 and PHB2), assembled into a membrane-associated ring-shaped supercomplex of approximately 1 mDa.

The protein resides in the mitochondrion inner membrane. Its subcellular location is the cytoplasm. The protein localises to the nucleus. It localises to the cell membrane. Its function is as follows. Protein with pleiotropic attributes mediated in a cell-compartment- and tissue-specific manner, which include the plasma membrane-associated cell signaling functions, mitochondrial chaperone, and transcriptional co-regulator of transcription factors and sex steroid hormones in the nucleus. Functionally, in the mitochondria, together with PHB, forms large ring complexes (prohibitin complexes) in the inner mitochondrial membrane (IMM) and functions as a chaperone protein that stabilizes mitochondrial respiratory enzymes and maintains mitochondrial integrity in the IMM, which is required for mitochondrial morphogenesis, neuronal survival, and normal lifespan. In the nucleus, serves as transcriptional co-regulator. The sequence is that of Prohibitin-2 (phbB) from Dictyostelium discoideum (Social amoeba).